A 571-amino-acid chain; its full sequence is 5' exonuclease Apollo (571 aa).

Disordered regions lie at residues 346-386 (TSRP…TDRN) and 431-487 (MDDN…SMHD). Basic and acidic residues-rich tracts occupy residues 367 to 386 (NHDDMDSNDTEIDHDTTDRN) and 453 to 468 (ECDHESPTKSSKEKSP). The segment covering 470–487 (MGSTNSGEMCSSMDSMHD) has biased composition (polar residues). The TBM motif lies at 501 to 532 (NPQSVTSAIPITLESEQFEHWLLENFTIPAEE).

This sequence belongs to the DNA repair metallo-beta-lactamase (DRMBL) family. In terms of assembly, interacts with terf2; the interaction is direct.

The protein resides in the chromosome. It is found in the telomere. The protein localises to the nucleus. It carries out the reaction a beta-lactam + H2O = a substituted beta-amino acid. 5'-3' exonuclease that plays a central role in telomere maintenance and protection during S-phase. Participates in the protection of telomeres against non-homologous end-joining (NHEJ)-mediated repair, thereby ensuring that telomeres do not fuse. Plays a key role in telomeric loop (T loop) formation by being recruited by terf2 at the leading end telomeres and by processing leading-end telomeres immediately after their replication via its exonuclease activity: generates 3' single-stranded overhang at the leading end telomeres avoiding blunt leading-end telomeres that are vulnerable to end-joining reactions and expose the telomere end in a manner that activates the DNA repair pathways. Possesses beta-lactamase activity, catalyzing the hydrolysis of penicillin G and nitrocefin. Exhibits no activity towards other beta-lactam antibiotic classes including cephalosporins (cefotaxime) and carbapenems (imipenem). In Danio rerio (Zebrafish), this protein is 5' exonuclease Apollo (dclre1b).